The chain runs to 58 residues: Short neurotoxin MS11 (58 aa).

Intrachain disulfides connect cysteine 3–cysteine 20, cysteine 13–cysteine 38, cysteine 42–cysteine 50, and cysteine 51–cysteine 56.

Belongs to the three-finger toxin family. Short-chain subfamily. Expressed by the venom gland.

It is found in the secreted. Produces peripheral paralysis by blocking neuromuscular transmission at the postsynaptic site. Binds to and inhibits the endogenous nicotinic acetylcholine receptors (nAChR) in the human rhabdomyosarcoma TE 671 cell line with an IC(50) of 266 mM. Not toxic to mice by intraperitoneal injection or to zebrafish by injection at the back dorsolateral region. The protein is Short neurotoxin MS11 of Micrurus surinamensis (Surinam coral snake).